The sequence spans 303 residues: Geranylgeranyl pyrophosphate synthase (303 aa).

Residues Lys-32, Arg-35, and His-64 each coordinate isopentenyl diphosphate. Residues Asp-71 and Asp-75 each coordinate Mg(2+). Residue Arg-80 participates in dimethylallyl diphosphate binding. Arg-81 is an isopentenyl diphosphate binding site. Dimethylallyl diphosphate is bound by residues Lys-158, Thr-159, Gln-192, Lys-209, and Lys-219.

It belongs to the FPP/GGPP synthase family. As to quaternary structure, homooligomer. Mg(2+) serves as cofactor.

Its subcellular location is the cytoplasm. The catalysed reaction is isopentenyl diphosphate + dimethylallyl diphosphate = (2E)-geranyl diphosphate + diphosphate. It carries out the reaction isopentenyl diphosphate + (2E)-geranyl diphosphate = (2E,6E)-farnesyl diphosphate + diphosphate. It catalyses the reaction isopentenyl diphosphate + (2E,6E)-farnesyl diphosphate = (2E,6E,10E)-geranylgeranyl diphosphate + diphosphate. It participates in isoprenoid biosynthesis; farnesyl diphosphate biosynthesis; farnesyl diphosphate from geranyl diphosphate and isopentenyl diphosphate: step 1/1. It functions in the pathway isoprenoid biosynthesis; geranyl diphosphate biosynthesis; geranyl diphosphate from dimethylallyl diphosphate and isopentenyl diphosphate: step 1/1. Its pathway is isoprenoid biosynthesis; geranylgeranyl diphosphate biosynthesis; geranylgeranyl diphosphate from farnesyl diphosphate and isopentenyl diphosphate: step 1/1. Catalyzes the trans-addition of the three molecules of IPP onto DMAPP to form geranylgeranyl pyrophosphate, an important precursor of carotenoids and geranylated proteins. The protein is Geranylgeranyl pyrophosphate synthase (ggps1) of Dictyostelium discoideum (Social amoeba).